A 149-amino-acid chain; its full sequence is Urease accessory protein UreE (149 aa).

Belongs to the UreE family.

The protein localises to the cytoplasm. In terms of biological role, involved in urease metallocenter assembly. Binds nickel. Probably functions as a nickel donor during metallocenter assembly. The protein is Urease accessory protein UreE of Ureaplasma parvum serovar 3 (strain ATCC 700970).